The primary structure comprises 318 residues: Trans-prenyltransferase (318 aa).

The helical transmembrane segment at methionine 1–threonine 21 threads the bilayer. Residues lysine 85, arginine 88, and histidine 122 each coordinate isopentenyl diphosphate. Residues aspartate 129 and aspartate 135 each contribute to the Mg(2+) site. A dimethylallyl diphosphate-binding site is contributed by arginine 140. Isopentenyl diphosphate is bound at residue arginine 141. Dimethylallyl diphosphate is bound by residues lysine 216, threonine 217, and glutamine 254.

This sequence belongs to the FPP/GGPP synthase family. Asfivirus trans-prenyltransferase subfamily. Mg(2+) is required as a cofactor.

Its subcellular location is the host endoplasmic reticulum. It localises to the host membrane. The enzyme catalyses isopentenyl diphosphate + dimethylallyl diphosphate = (2E)-geranyl diphosphate + diphosphate. It catalyses the reaction isopentenyl diphosphate + (2E)-geranyl diphosphate = (2E,6E)-farnesyl diphosphate + diphosphate. The catalysed reaction is isopentenyl diphosphate + (2E,6E)-farnesyl diphosphate = (2E,6E,10E)-geranylgeranyl diphosphate + diphosphate. It carries out the reaction isopentenyl diphosphate + (2E,6E,10E)-geranylgeranyl diphosphate = (2E,6E,10E,14E)-geranylfarnesyl diphosphate + diphosphate. Its pathway is isoprenoid biosynthesis; farnesyl diphosphate biosynthesis; farnesyl diphosphate from geranyl diphosphate and isopentenyl diphosphate: step 1/1. It participates in isoprenoid biosynthesis; geranyl diphosphate biosynthesis; geranyl diphosphate from dimethylallyl diphosphate and isopentenyl diphosphate: step 1/1. The protein operates within isoprenoid biosynthesis; geranylgeranyl diphosphate biosynthesis; geranylgeranyl diphosphate from farnesyl diphosphate and isopentenyl diphosphate: step 1/1. Functionally, trans-prenyltransferase that catalyzes the sequential condensation of isopentenyl diphosphate (IPP) with different allylic diphosphates, such as dimethylallyl diphosphate (DMAPP), geranyl diphosphate (GPP), farnesyl diphosphate (FPP) and geranylgeranyl diphosphate (GGPP), farnesyl diphosphate being the best allylic substrate. This chain is Trans-prenyltransferase, found in African swine fever virus (isolate Tick/South Africa/Pretoriuskop Pr4/1996) (ASFV).